Here is a 1051-residue protein sequence, read N- to C-terminus: MSTDVSERGAEAGSSSGLLSSPCVGDGSDSAQMKKRNTETAGMKARKKLRSEESGLSTLVSIASFGGQASPDRSKVSKQQNGASGHRPVTSCTHCRQHKIKCNASENFPSSCSRCERMGLQCEIDPQFRPKKGSQLQNLKNEIEELKTKLEFLLRSEGILSSAMRNSDLGRQILQAIKLQDSPQQQTGISVQTYLASEPELLKSESSVKSSVNTPSGSYSASAVDVSRAKTNSVPPLLNDSAPANSNRESLPPVLQMALKYHNSSHNTPIDTPSSHTTPMLSPEVKKPVVATTNAMPLLPSPYANIDEFVLGDVHIPIDKAKELHHIFVKKYLPYFPIMTTDSVTELYSQSQLLFWTIMLTACLSDPEPTLYNSLASLIKQLAIETCWIRTPRSTHISQALLILCNWPLPNQKVLDDCSYRFVGLAKSLSFQLGLHRGEFMSEFTRTQTLMPDAEKWRTRTWLGIFFAEQCWSSILGLPSTSQTDYFIEQARRGKFDLPVRFHRLLCLAHFQASLSNIMGSSVESPDGLMDAKERGSSLAALERELARLHSELKFDSDPVVEMYYLYAKLMIYCFAFLPETPKADQTQYVTEAYLAATRIITLLTKTLEDTQLIELPIYVRQSVTYAALILFKLHLTPYLPEKYVDSARQSIVTVHRLYRNQLTAWATGVENDISRTASVLEKLNFVLITYPEIFVEEDGIISRMRSHLTGTLFYDLIYCVHEARRRQVDSEYNEMLEKNRKEQPVHTAATGSQDTEKRAPKRRLFPLPFYNQISKEDFETITQTTPGGTTVTTLVPTKNAILQAKKLQRSQGGQKGEPIRSINGIPLAMLDATGSVNGALVGDNLNSSVPQAAVAASAPPEPAAVAATVPPEPAPAPGGQSYPLFQPLYVQPAANVPMQRSASASVAEALPFRRPGMPKITSESIASGNPNSLFGNDGSPFPAIAQKSAKPAPPAKPDGQPAKQPAPYPNLNVFLGANASARMASYSSLMDAADPLAPDPDRAPLAAPGPLAHISELDSFFLQQSAGWIEGSSSNDDFLGWYDINMAPEF.

Positions 1–10 (MSTDVSERGA) are enriched in basic and acidic residues. Disordered stretches follow at residues 1–54 (MSTD…SEES) and 67–90 (GQASPDRSKVSKQQNGASGHRPVT). Residues 11–21 (EAGSSSGLLSS) show a composition bias toward low complexity. The segment at residues 92-122 (CTHCRQHKIKCNASENFPSSCSRCERMGLQC) is a DNA-binding region (zn(2)-C6 fungal-type). Residues 206–218 (SSVKSSVNTPSGS) are compositionally biased toward low complexity. 3 disordered regions span residues 206–227 (SSVKSSVNTPSGSYSASAVDVS), 738–759 (EKNRKEQPVHTAATGSQDTEKR), and 927–968 (ASGN…QPAP).

The protein resides in the nucleus. Functionally, putative transcription factor. The polypeptide is Putative transcription factor SEF1 (SEF1) (Eremothecium gossypii (strain ATCC 10895 / CBS 109.51 / FGSC 9923 / NRRL Y-1056) (Yeast)).